The chain runs to 233 residues: Ribonuclease 3 (233 aa).

One can recognise an RNase III domain in the interval 8–135 (AQRFLEDKQL…VIGAIYLDQG (128 aa)). Mg(2+) is bound at residue E48. The active site involves D52. Mg(2+) is bound by residues D121 and E124. E124 is a catalytic residue. One can recognise a DRBM domain in the interval 161-230 (DYKSKLQELV…AQKVLQDNLV (70 aa)).

This sequence belongs to the ribonuclease III family. Homodimer. Mg(2+) serves as cofactor.

The protein localises to the cytoplasm. The catalysed reaction is Endonucleolytic cleavage to 5'-phosphomonoester.. In terms of biological role, digests double-stranded RNA. Involved in the processing of primary rRNA transcript to yield the immediate precursors to the large and small rRNAs (23S and 16S). Processes some mRNAs, and tRNAs when they are encoded in the rRNA operon. Processes pre-crRNA and tracrRNA of type II CRISPR loci if present in the organism. This is Ribonuclease 3 from Syntrophomonas wolfei subsp. wolfei (strain DSM 2245B / Goettingen).